The chain runs to 104 residues: Salivary protein FS145 (104 aa).

An N-terminal signal peptide occupies residues 1–18; sequence MKLFAVFLLFCLVNQIYC. 4 disulfide bridges follow: cysteine 32/cysteine 80, cysteine 62/cysteine 89, cysteine 72/cysteine 100, and cysteine 76/cysteine 102. A Putative integrin attachment site; atypical (WGD) motif is present at residues 92–94; sequence WGD.

In terms of assembly, interacts with host integrin alpha-V/beta-3 (ITGAV:ITGB3).

It is found in the secreted. Functionally, inhibits proliferation, adhesion and migration of host cells as well as host angiogenesis by blocking host integrin alpha-V/beta-3 (ITGAV:ITGB3). In Xenopsylla cheopis (Oriental rat flea), this protein is Salivary protein FS145.